The sequence spans 58 residues: Photosystem II reaction center protein K (58 aa).

Positions 1 to 21 (MLNMISTFFDSSSNFSEAFLA) are excised as a propeptide. Residues 29–49 (IFDPIVDVMPIIPVFFLLLAF) traverse the membrane as a helical segment.

The protein belongs to the PsbK family. PSII is composed of 1 copy each of membrane proteins PsbA, PsbB, PsbC, PsbD, PsbE, PsbF, PsbH, PsbI, PsbJ, PsbK, PsbL, PsbM, PsbT, PsbX, PsbY, PsbZ, Psb30/Ycf12, at least 3 peripheral proteins of the oxygen-evolving complex and a large number of cofactors. It forms dimeric complexes.

It localises to the plastid. It is found in the chloroplast thylakoid membrane. One of the components of the core complex of photosystem II (PSII). PSII is a light-driven water:plastoquinone oxidoreductase that uses light energy to abstract electrons from H(2)O, generating O(2) and a proton gradient subsequently used for ATP formation. It consists of a core antenna complex that captures photons, and an electron transfer chain that converts photonic excitation into a charge separation. The sequence is that of Photosystem II reaction center protein K from Chaetosphaeridium globosum (Charophycean green alga).